Consider the following 483-residue polypeptide: Isocitrate dehydrogenase [NADP] (483 aa).

Residue Thr74 coordinates NADP(+). The D-threo-isocitrate site is built by Ser83, Asn85, Arg89, Arg99, and Arg121. Asp232 provides a ligand contact to Mg(2+). NADP(+)-binding positions include 264–270 and Asn277; that span reads HGSAPDI.

It belongs to the isocitrate and isopropylmalate dehydrogenases family. As to quaternary structure, homodimer. Requires Mg(2+) as cofactor. The cofactor is Mn(2+).

The catalysed reaction is D-threo-isocitrate + NADP(+) = 2-oxoglutarate + CO2 + NADPH. In terms of biological role, catalyzes the oxidative decarboxylation of isocitrate to 2-oxoglutarate and carbon dioxide with the concomitant reduction of NADP(+). The polypeptide is Isocitrate dehydrogenase [NADP] (icd) (Rickettsia prowazekii (strain Madrid E)).